The sequence spans 164 residues: UPF0303 protein RHE_CH02903 (164 aa).

This sequence belongs to the UPF0303 family.

The sequence is that of UPF0303 protein RHE_CH02903 from Rhizobium etli (strain ATCC 51251 / DSM 11541 / JCM 21823 / NBRC 15573 / CFN 42).